We begin with the raw amino-acid sequence, 128 residues long: CD59 glycoprotein (128 aa).

The N-terminal stretch at 1–25 (MGIQGGSVLFGLLLVLAVFCHSGHS) is a signal peptide. The 83-residue stretch at 26 to 108 (LQCYNCPNPT…QLENGGTSLS (83 aa)) folds into the UPAR/Ly6 domain. Intrachain disulfides connect C28–C51, C31–C38, and C44–C64. N43 carries an N-linked (GlcNAc...) asparagine glycan. A glycan (N-linked (Glc) (glycation) lysine) is linked at K66. Cystine bridges form between C70–C88 and C89–C94. O-linked (GalNAc...) threonine glycosylation is found at T76 and T77. N102 carries the GPI-anchor amidated asparagine lipid modification. Residues 103–128 (GGTSLSEKTVLLLVTPFLAAAWSLHP) constitute a propeptide, removed in mature form.

In terms of assembly, interacts with T-cell surface antigen CD2. N- and O-glycosylated. The N-glycosylation mainly consists of a family of biantennary complex-type structures with and without lactosamine extensions and outer arm fucose residues. Also significant amounts of triantennary complexes (22%). Variable sialylation also present in the Asn-43 oligosaccharide. The predominant O-glycans are mono-sialylated forms of the disaccharide, Gal-beta-1,3GalNAc, and their sites of attachment are probably on Thr-76 and Thr-77. The GPI-anchor of soluble urinary CD59 has no inositol-associated phospholipid, but is composed of seven different GPI-anchor variants of one or more monosaccharide units. Major variants contain sialic acid, mannose and glucosamine. Sialic acid linked to an N-acetylhexosamine-galactose arm is present in two variants. In terms of processing, glycated. Glycation is found in diabetic subjects, but only at minimal levels in nondiabetic subjects. Glycated CD59 lacks MAC-inhibitory function and confers to vascular complications of diabetes.

Its subcellular location is the cell membrane. The protein resides in the secreted. In terms of biological role, potent inhibitor of the complement membrane attack complex (MAC) action, which protects human cells from damage during complement activation. Acts by binding to the beta-haipins of C8 (C8A and C8B) components of the assembling MAC, forming an intermolecular beta-sheet that prevents incorporation of the multiple copies of C9 required for complete formation of the osmolytic pore. Its function is as follows. The soluble form from urine retains its specific complement binding activity, but exhibits greatly reduced ability to inhibit complement membrane attack complex (MAC) assembly on cell membranes. In Homo sapiens (Human), this protein is CD59 glycoprotein.